A 266-amino-acid chain; its full sequence is Methylsterol monooxygenase 2-2 (266 aa).

3 helical membrane passes run 24–44 (IGSF…FIFL), 71–91 (RLLL…YPVF), and 107–127 (EVSA…YWGH). The 135-residue stretch at 113-247 (LFYFIIEDFV…FVYMDWIFGT (135 aa)) folds into the Fatty acid hydroxylase domain. The short motif at 127 to 131 (HRILH) is the Histidine box-1 element. A Histidine box-2 motif is present at residues 140-144 (HSVHH). A helical transmembrane segment spans residues 162 to 182 (ILFLGFATIVGPALTGPHLIT). The Histidine box-3 signature appears at 219–225 (FHDYHHR).

Belongs to the sterol desaturase family. The cofactor is Fe cation. As to expression, expressed in shoots, roots, siliques and flowers, and, slightly, in developing seeds.

It localises to the endoplasmic reticulum membrane. The enzyme catalyses 4,4-dimethyl-5alpha-cholest-7-en-3beta-ol + 6 Fe(II)-[cytochrome b5] + 3 O2 + 5 H(+) = 4alpha-carboxy-4beta-methyl-5alpha-cholest-7-ene-3beta-ol + 6 Fe(III)-[cytochrome b5] + 4 H2O. The catalysed reaction is 24-methylidenelophenol + 6 Fe(II)-[cytochrome b5] + 3 O2 + 5 H(+) = 4alpha-carboxy-ergosta-7,24(24(1))-dien-3beta-ol + 6 Fe(III)-[cytochrome b5] + 4 H2O. Non-heme iron oxygenase involved in sterols biosynthesis by catalyzing the removal of the second methyl group at the C-4 position. 24-ethylidenelophenol and 24-ethyllophenol are the preferred substrates. Together with SMO2-1, required during embryogenesis, probably by maintaining sterols and auxin homeostasis. This chain is Methylsterol monooxygenase 2-2, found in Arabidopsis thaliana (Mouse-ear cress).